Consider the following 145-residue polypeptide: Neuropeptide-like protein 68 (145 aa).

Residues 1 to 15 (MLLVLLFSLFSVGFG) form the signal peptide. The disordered stretch occupies residues 41 to 65 (SSSSEDDTPDFPSLRDKRGVDPMSI).

Its subcellular location is the secreted. This is Neuropeptide-like protein 68 from Caenorhabditis elegans.